Here is a 138-residue protein sequence, read N- to C-terminus: Basic phospholipase A2 homolog Tbo-K49 (138 aa).

The first 16 residues, 1–16, serve as a signal peptide directing secretion; the sequence is MRTLWIMAVLLVGVEG. Disulfide bonds link C42–C131, C44–C60, C59–C111, C65–C138, C66–C104, and C91–C102. The tract at residues 121–133 is important for membrane-damaging activities in eukaryotes and bacteria; heparin-binding; it reads KKERINTKIFCKK.

As to quaternary structure, monomer. Expressed by the venom gland.

Its subcellular location is the secreted. Snake venom phospholipase A2 homolog that lacks catalytic activity. It induces local edema. Is myotoxic. A model of myotoxic mechanism has been proposed: an apo Lys49-PLA2 is activated by the entrance of a hydrophobic molecule (e.g. fatty acid) at the hydrophobic channel of the protein leading to a reorientation of a monomer. This reorientation causes a transition between 'inactive' to 'active' states, causing alignment of C-terminal and membrane-docking sites (MDoS) side-by-side and putting the membrane-disruption sites (MDiS) in the same plane, exposed to solvent and in a symmetric position for both monomers. The MDoS region stabilizes the toxin on membrane by the interaction of charged residues with phospholipid head groups. Subsequently, the MDiS region destabilizes the membrane with penetration of hydrophobic residues. This insertion causes a disorganization of the membrane, allowing an uncontrolled influx of ions (i.e. calcium and sodium), and eventually triggering irreversible intracellular alterations and cell death. The chain is Basic phospholipase A2 homolog Tbo-K49 from Craspedocephalus borneensis (Borneo pit viper).